The sequence spans 635 residues: Threonine--tRNA ligase (635 aa).

Residues 1–62 form the TGS domain; sequence MITITLPDGS…EHDAILRIIT (62 aa). The tract at residues 244–535 is catalytic; the sequence is DHRKIGKAQD…LIEHYAGIWP (292 aa). C335, H386, and H512 together coordinate Zn(2+).

Belongs to the class-II aminoacyl-tRNA synthetase family. Homodimer. Zn(2+) is required as a cofactor.

The protein localises to the cytoplasm. The enzyme catalyses tRNA(Thr) + L-threonine + ATP = L-threonyl-tRNA(Thr) + AMP + diphosphate + H(+). Functionally, catalyzes the attachment of threonine to tRNA(Thr) in a two-step reaction: L-threonine is first activated by ATP to form Thr-AMP and then transferred to the acceptor end of tRNA(Thr). Also edits incorrectly charged L-seryl-tRNA(Thr). This chain is Threonine--tRNA ligase, found in Xylella fastidiosa (strain M23).